Reading from the N-terminus, the 205-residue chain is Outer-membrane lipoprotein carrier protein (205 aa).

Residues 1-22 form the signal peptide; it reads MKKIVIVISILLTSFLSSAVSA.

This sequence belongs to the LolA family. Monomer.

It localises to the periplasm. In terms of biological role, participates in the translocation of lipoproteins from the inner membrane to the outer membrane. Only forms a complex with a lipoprotein if the residue after the N-terminal Cys is not an aspartate (The Asp acts as a targeting signal to indicate that the lipoprotein should stay in the inner membrane). This Psychromonas ingrahamii (strain DSM 17664 / CCUG 51855 / 37) protein is Outer-membrane lipoprotein carrier protein.